The following is a 126-amino-acid chain: Small ribosomal subunit protein uS13 (126 aa).

Residues 101 to 126 (QKTKNNCRTRKGKKKTVANKKKKINK) form a disordered region.

Belongs to the universal ribosomal protein uS13 family. Part of the 30S ribosomal subunit. Forms a loose heterodimer with protein S19. Forms two bridges to the 50S subunit in the 70S ribosome.

Its function is as follows. Located at the top of the head of the 30S subunit, it contacts several helices of the 16S rRNA. In the 70S ribosome it contacts the 23S rRNA (bridge B1a) and protein L5 of the 50S subunit (bridge B1b), connecting the 2 subunits; these bridges are implicated in subunit movement. Contacts the tRNAs in the A and P-sites. This is Small ribosomal subunit protein uS13 from Karelsulcia muelleri (strain GWSS) (Sulcia muelleri).